Here is a 170-residue protein sequence, read N- to C-terminus: Fluoride-specific ion channel FluC 2 (170 aa).

A run of 4 helical transmembrane segments spans residues 8–28 (ALVF…TVWI), 55–75 (IALL…VGMI), 84–104 (TFWG…AAAV), and 114–134 (ILIG…AAAM). Positions 92 and 95 each coordinate Na(+).

The protein belongs to the fluoride channel Fluc/FEX (TC 1.A.43) family.

It localises to the cell membrane. It catalyses the reaction fluoride(in) = fluoride(out). Na(+) is not transported, but it plays an essential structural role and its presence is essential for fluoride channel function. Fluoride-specific ion channel. Important for reducing fluoride concentration in the cell, thus reducing its toxicity. The polypeptide is Fluoride-specific ion channel FluC 2 (Corynebacterium jeikeium (strain K411)).